We begin with the raw amino-acid sequence, 782 residues long: General transcription and DNA repair factor IIH helicase/translocase subunit XPB (782 aa).

Positions 1–11 (MGKRDRVDRDK) are enriched in basic and acidic residues. Residues 1–52 (MGKRDRVDRDKKKSKKRQYEEEEEDEDDAPGNESQEAVPSAAGKQVDESSTK) are disordered. The Nuclear localization signal signature appears at 6–18 (RVDRDKKKSKKRQ). Acidic residues predominate over residues 20 to 30 (EEEEEDEDDAP). Serine 34 is modified (phosphoserine). The Helicase ATP-binding domain occupies 328–489 (FGNGRARSGV…LNFLIGPKLY (162 aa)). Residue 341–348 (PCGAGKSL) participates in ATP binding. A DEVH box motif is present at residues 442–445 (EVHT). Residues 543–703 (ACQFLIKFHE…AGMEEEELAF (161 aa)) form the Helicase C-terminal domain. A Phosphoserine modification is found at serine 686. At serine 751 the chain carries Phosphoserine; by CK2.

Belongs to the helicase family. RAD25/XPB subfamily. Component of the 7-subunit TFIIH core complex composed of XPB/ERCC3, XPD/ERCC2, GTF2H1, GTF2H2, GTF2H3, GTF2H4 and GTF2H5, which is active in NER. The core complex associates with the 3-subunit CDK-activating kinase (CAK) module composed of CCNH/cyclin H, CDK7 and MNAT1 to form the 10-subunit holoenzyme (holo-TFIIH) active in transcription. Interacts with PUF60. Interacts with ATF7IP. Interacts with KAT2A; leading to KAT2A recruitment to promoters and acetylation of histones. Part of TBP-based Pol II pre-initiation complex (PIC), in which Pol II core assembles with general transcription factors and other specific initiation factors including GTF2E1, GTF2E2, GTF2F1, GTF2F2, TCEA1, ERCC2, ERCC3, GTF2H2, GTF2H3, GTF2H4, GTF2H5, GTF2A1, GTF2A2, GTF2B and TBP; this large multi-subunit PIC complex mediates DNA unwinding and targets Pol II core to the transcription start site where the first phosphodiester bond forms. Phosphorylation on Ser-751 by CK2 controls the 5'-excision activity of ERCC1-XPF endonuclease; phosphorylated protein inhibits the excision activity and thus NER. Dephosphorylation reactivates the 5'-excision step. Phosphorylation has no effect on transcription or the 3'-5' helicase activity.

The protein localises to the nucleus. The enzyme catalyses Couples ATP hydrolysis with the unwinding of duplex DNA by translocating in the 3'-5' direction.. It carries out the reaction ATP + H2O = ADP + phosphate + H(+). Phosphorylation on Ser-751 by CK2 controls the 5'-excision activity of ERCC1-XPF endonuclease; phosphorylated protein inhibits the excision activity and thus NER. ATPase activity is stimulated by TFIIH subunit p52 (GTF2H4). DNA translocase activity by this subunit in TFIIH is stimulated by XPA, ERCC5/XPG and XFP plus ERCC1. Functionally, ATP-dependent 3'-5' DNA helicase/translocase; binds dsDNA rather than ssDNA, unzipping it in a translocase rather than classical helicase activity. Component of the general transcription and DNA repair factor IIH (TFIIH) core complex. When complexed to CDK-activating kinase (CAK), involved in RNA transcription by RNA polymerase II. The ATPase activity of XPB/ERCC3, but not its helicase activity, is required for DNA opening; it may wrap around the damaged DNA wedging it open, causing localized melting and twisting that allows XPD/ERCC2 helicase to anchor. The ATP-dependent helicase activity of XPB/ERCC3 may be required for promoter escape. Also involved in transcription-coupled nucleotide excision repair (NER) of damaged DNA. In NER, TFIIH acts by opening DNA around the lesion to allow the excision of the damaged oligonucleotide and its replacement by a new DNA fragment. The structure of the TFIIH transcription complex differs from the NER-TFIIH complex; large movements by XPD/ERCC2 and XPB/ERCC3 are stabilized by XPA. In Rattus norvegicus (Rat), this protein is General transcription and DNA repair factor IIH helicase/translocase subunit XPB (Ercc3).